The following is a 272-amino-acid chain: Tryptophan synthase alpha chain (272 aa).

Active-site proton acceptor residues include E49 and E60.

Belongs to the TrpA family. As to quaternary structure, tetramer of two alpha and two beta chains.

The enzyme catalyses (1S,2R)-1-C-(indol-3-yl)glycerol 3-phosphate + L-serine = D-glyceraldehyde 3-phosphate + L-tryptophan + H2O. Its pathway is amino-acid biosynthesis; L-tryptophan biosynthesis; L-tryptophan from chorismate: step 5/5. In terms of biological role, the alpha subunit is responsible for the aldol cleavage of indoleglycerol phosphate to indole and glyceraldehyde 3-phosphate. In Legionella pneumophila (strain Lens), this protein is Tryptophan synthase alpha chain.